We begin with the raw amino-acid sequence, 334 residues long: tRNA-cytidine(32) 2-sulfurtransferase (334 aa).

Positions serine 74–serine 79 match the PP-loop motif motif. 3 residues coordinate [4Fe-4S] cluster: cysteine 149, cysteine 152, and cysteine 240.

Belongs to the TtcA family. As to quaternary structure, homodimer. The cofactor is Mg(2+). [4Fe-4S] cluster is required as a cofactor.

The protein localises to the cytoplasm. It catalyses the reaction cytidine(32) in tRNA + S-sulfanyl-L-cysteinyl-[cysteine desulfurase] + AH2 + ATP = 2-thiocytidine(32) in tRNA + L-cysteinyl-[cysteine desulfurase] + A + AMP + diphosphate + H(+). It participates in tRNA modification. Its function is as follows. Catalyzes the ATP-dependent 2-thiolation of cytidine in position 32 of tRNA, to form 2-thiocytidine (s(2)C32). The sulfur atoms are provided by the cysteine/cysteine desulfurase (IscS) system. This Burkholderia ambifaria (strain ATCC BAA-244 / DSM 16087 / CCUG 44356 / LMG 19182 / AMMD) (Burkholderia cepacia (strain AMMD)) protein is tRNA-cytidine(32) 2-sulfurtransferase.